The following is a 786-amino-acid chain: Receptor-like protein 30 (786 aa).

The signal sequence occupies residues 1–30; sequence MIPSQSNSFSGSVITLYFFLLGSLVLRTLA. At 31–739 the chain is on the extracellular side; that stretch reads SSRLHYCRHD…SEPEEQVINW (709 aa). N-linked (GlcNAc...) asparagine glycosylation is found at asparagine 67, asparagine 98, asparagine 115, and asparagine 133. LRR repeat units follow at residues 110 to 133, 134 to 158, 159 to 181, and 183 to 204; these read LQQL…SLGN, LSRL…VSKL, NQLR…SFTN, and TKLS…SFIL. Residues asparagine 181, asparagine 199, and asparagine 206 are each glycosylated (N-linked (GlcNAc...) asparagine). LRR repeat units follow at residues 207 to 231, 233 to 255, 257 to 279, 280 to 304, 305 to 328, 329 to 352, 354 to 375, 376 to 399, 400 to 423, 425 to 447, 448 to 472, 474 to 496, 497 to 524, and 526 to 546; these read LTSL…MSGL, NLKY…LFTI, SLQI…NISS, SSRL…ISEI, HSLI…ISKL, VNLQ…LWGL, TVTL…ALDG, ESMQ…ICKQ, RFLK…LKNS, YWLK…VFVN, ASML…LINC, GMEL…LVSL, PSLR…GFQH, and RLID…YFSN. N-linked (GlcNAc...) asparagine glycosylation is present at asparagine 276. Asparagine 338 carries N-linked (GlcNAc...) asparagine glycosylation. Asparagine 413, asparagine 422, asparagine 434, asparagine 447, and asparagine 471 each carry an N-linked (GlcNAc...) asparagine glycan. An N-linked (GlcNAc...) asparagine glycan is attached at asparagine 558. LRR repeat units lie at residues 596–621, 622–645, 646–669, and 671–694; these read IPYF…VGLL, KELR…LANL, TNLE…LGSL, and FLST…QFQS. Asparagine 628 and asparagine 644 each carry an N-linked (GlcNAc...) asparagine glycan. Asparagine 676 carries an N-linked (GlcNAc...) asparagine glycan. Residues 740–760 form a helical membrane-spanning segment; the sequence is IAAAIAYGPGVFCGLVIGHIF. The Cytoplasmic portion of the chain corresponds to 761–786; it reads FTAHKHEWFMEKFHRNKRRVVTTSAR.

The protein belongs to the RLP family.

It is found in the cell membrane. Functionally, receptor for microbe-associated molecular patterns (MAMPs) that induces a BAK1-dependent basal immune response to necrotrophic fungi (e.g. S.sclerotiorum) in the presence of MAMPs (e.g. flg22 and SCLEROTINIA CULTURE FILTRATE ELICITOR1 (SCFE1) from the necrotrophic fungal pathogen S.sclerotiorum). Functionality seems to depend on the presence of the receptor kinase SOBIR1 as an adapter protein. Required for full non-host resistance to bacterial pathogens (e.g. P.syringae pv phaseolicola). The protein is Receptor-like protein 30 of Arabidopsis thaliana (Mouse-ear cress).